Here is a 335-residue protein sequence, read N- to C-terminus: Large ribosomal subunit protein uL3 (335 aa).

Belongs to the universal ribosomal protein uL3 family. Part of the 50S ribosomal subunit. Forms a cluster with proteins L14 and L24e.

In terms of biological role, one of the primary rRNA binding proteins, it binds directly near the 3'-end of the 23S rRNA, where it nucleates assembly of the 50S subunit. The polypeptide is Large ribosomal subunit protein uL3 (Methanocaldococcus jannaschii (strain ATCC 43067 / DSM 2661 / JAL-1 / JCM 10045 / NBRC 100440) (Methanococcus jannaschii)).